The chain runs to 156 residues: Transcription elongation factor GreA (156 aa).

Residues 2 to 78 are a coiled coil; the sequence is AKEIILTQEG…MISKAKLIED (77 aa).

Belongs to the GreA/GreB family.

In terms of biological role, necessary for efficient RNA polymerase transcription elongation past template-encoded arresting sites. The arresting sites in DNA have the property of trapping a certain fraction of elongating RNA polymerases that pass through, resulting in locked ternary complexes. Cleavage of the nascent transcript by cleavage factors such as GreA or GreB allows the resumption of elongation from the new 3'terminus. GreA releases sequences of 2 to 3 nucleotides. This Mesoplasma florum (strain ATCC 33453 / NBRC 100688 / NCTC 11704 / L1) (Acholeplasma florum) protein is Transcription elongation factor GreA.